A 628-amino-acid chain; its full sequence is Protein ETHYLENE INSENSITIVE 3 (628 aa).

A coiled-coil region spans residues 38 to 68 (EDDYTDDEIDVDELERRMWRDKMRLKRLKEQ). Over residues 66–79 (KEQDKGKEGVDAAK) the composition is skewed to basic and acidic residues. The interval 66-92 (KEQDKGKEGVDAAKQRQSQEQARRKKM) is disordered. Positions 174–306 (TPHTLQELQD…SLARELYPES (133 aa)) are DNA-binding domain.

This sequence belongs to the EIN3 family. In terms of assembly, acts as a homodimer to bind the primary ethylene response element. Interacts with TAF12B. Interacts with KIN10. Binds to ENAP1 in the presence of ethylene; this reaction facilitates its association with histone. Phosphorylated by KIN10.

It localises to the nucleus. Its activity is regulated as follows. Activated by phosphorylation by MPK3 and MPK6. Down-regulated by KIN10 that controls its protein stability under a phosphorylation-dependent manner. Satnilitzed during hypoxia (e.g. submergences) via a ceramides-triggered and CTR1-dependent manner. In terms of biological role, transcription factor acting as a positive regulator in the ethylene response pathway, by promoting histone acetylation in an ENAP1-dependent manner, thus accelerating the expression of ethylene-responsive genes. Binds DNA. Is required for ethylene responsiveness in adult plant tissues. Binds a primary ethylene response element present in the ETHYLENE-RESPONSE-FACTOR1 promoter with consequence to activate the transcription of this gene. The sequence is that of Protein ETHYLENE INSENSITIVE 3 from Arabidopsis thaliana (Mouse-ear cress).